Here is a 1316-residue protein sequence, read N- to C-terminus: DNA-directed RNA polymerase subunit beta' (1316 aa).

Residues Cys-60, Cys-62, Cys-75, and Cys-78 each contribute to the Zn(2+) site. Mg(2+) is bound by residues Asp-535, Asp-537, and Asp-539. Residues Cys-891, Cys-968, Cys-975, and Cys-978 each contribute to the Zn(2+) site.

It belongs to the RNA polymerase beta' chain family. In terms of assembly, the RNAP catalytic core consists of 2 alpha, 1 beta, 1 beta' and 1 omega subunit. When a sigma factor is associated with the core the holoenzyme is formed, which can initiate transcription. Mg(2+) is required as a cofactor. Requires Zn(2+) as cofactor.

It carries out the reaction RNA(n) + a ribonucleoside 5'-triphosphate = RNA(n+1) + diphosphate. Its function is as follows. DNA-dependent RNA polymerase catalyzes the transcription of DNA into RNA using the four ribonucleoside triphosphates as substrates. The chain is DNA-directed RNA polymerase subunit beta' from Mycobacterium bovis (strain BCG / Pasteur 1173P2).